The following is a 332-amino-acid chain: Oligopeptide transport ATP-binding protein OppF (332 aa).

The ABC transporter domain occupies 23–264; sequence KNDKSLFFAK…TKHPYTKALM (242 aa). 56–63 provides a ligand contact to ATP; that stretch reads GESGCGKS.

This sequence belongs to the ABC transporter superfamily. The complex is composed of two ATP-binding proteins (OppD and OppF), two transmembrane proteins (OppB and OppC) and a solute-binding protein (OppA).

The protein localises to the cell inner membrane. It catalyses the reaction a [peptide](out) + ATP + H2O = a [peptide](in) + ADP + phosphate + H(+). In terms of biological role, part of the ABC transporter complex OppABCDF involved in the uptake of oligopeptides. Probably responsible for energy coupling to the transport system. The chain is Oligopeptide transport ATP-binding protein OppF (oppF) from Haemophilus influenzae (strain ATCC 51907 / DSM 11121 / KW20 / Rd).